The following is a 164-amino-acid chain: C-phycoerythrin class 1 subunit alpha (164 aa).

(2R,3E)-phycoerythrobilin contacts are provided by Cys-82 and Cys-139.

The protein belongs to the phycobiliprotein family. In terms of assembly, heterodimer of an alpha and a beta chain. In terms of processing, contains one covalently linked bilin chromophore.

It is found in the cellular thylakoid membrane. Functionally, light-harvesting photosynthetic bile pigment-protein from the phycobiliprotein complex. The sequence is that of C-phycoerythrin class 1 subunit alpha (cpeA) from Synechococcus sp. (strain WH7803).